The sequence spans 245 residues: 1-(5-phosphoribosyl)-5-[(5-phosphoribosylamino)methylideneamino] imidazole-4-carboxamide isomerase (245 aa).

The active-site Proton acceptor is aspartate 7. The Proton donor role is filled by aspartate 129.

It belongs to the HisA/HisF family.

It localises to the cytoplasm. It catalyses the reaction 1-(5-phospho-beta-D-ribosyl)-5-[(5-phospho-beta-D-ribosylamino)methylideneamino]imidazole-4-carboxamide = 5-[(5-phospho-1-deoxy-D-ribulos-1-ylimino)methylamino]-1-(5-phospho-beta-D-ribosyl)imidazole-4-carboxamide. The protein operates within amino-acid biosynthesis; L-histidine biosynthesis; L-histidine from 5-phospho-alpha-D-ribose 1-diphosphate: step 4/9. The polypeptide is 1-(5-phosphoribosyl)-5-[(5-phosphoribosylamino)methylideneamino] imidazole-4-carboxamide isomerase (Escherichia coli O7:K1 (strain IAI39 / ExPEC)).